The chain runs to 254 residues: Ribosomal RNA large subunit methyltransferase E (254 aa).

Residues 1–18 are compositionally biased toward gly residues; the sequence is MTNSGKTGGKSGKGGTGG. A disordered region spans residues 1–26; the sequence is MTNSGKTGGKSGKGGTGGARALKVRV. The S-adenosyl-L-methionine site is built by G89, W91, D119, D135, and D159. The active-site Proton acceptor is K199.

It belongs to the class I-like SAM-binding methyltransferase superfamily. RNA methyltransferase RlmE family.

Its subcellular location is the cytoplasm. It carries out the reaction uridine(2552) in 23S rRNA + S-adenosyl-L-methionine = 2'-O-methyluridine(2552) in 23S rRNA + S-adenosyl-L-homocysteine + H(+). Functionally, specifically methylates the uridine in position 2552 of 23S rRNA at the 2'-O position of the ribose in the fully assembled 50S ribosomal subunit. This is Ribosomal RNA large subunit methyltransferase E from Parvibaculum lavamentivorans (strain DS-1 / DSM 13023 / NCIMB 13966).